Consider the following 1231-residue polypeptide: MANISSPFGQNEWLVEAMYRKFRDDPSSVDPSWHEFLVDYSPEPTSQPAAEPTRVTSPLVAERAAAAAPQAPPKPADTAAAGNGVVAALAAKTAVPPPAEGDEVAVLRGAAAAVVKNMSASLEVPTATSVRAVPAKLLIDNRIVINNQLKRTRGGKISFTHLLGYALVQAVKKFPNMNRHYTEVDGKPTAVTPAHTNLGLAIDLQGKDGKRSLVVAGIKRCETMRFAQFVTAYEDIVRRARDGKLTTEDFAGVTISLTNPGTIGTVHSVPRLMPGQGAIIGVGAMEYPAEFQGASEERIAELGIGKLITLTSTYDHRIIQGAESGDFLRTIHELLLSDGFWDEVFRELSIPYLPVRWSTDNPDSIVDKNARVMNLIAAYRNRGHLMADTDPLRLDKARFRSHPDLEVLTHGLTLWDLDRVFKVDGFAGAQYKKLRDVLGLLRDAYCRHIGVEYAHILDPEQKEWLEQRVETKHVKPTVAQQKYILSKLNAAEAFETFLQTKYVGQKRFSLEGAESVIPMMDAAIDQCAEHGLDEVVIGMPHRGRLNVLANIVGKPYSQIFTEFEGNLNPSQAHGSGDVKYHLGATGLYLQMFGDNDIQVSLTANPSHLEAVDPVLEGLVRAKQDLLDHGSIDSDGQRAFSVVPLMLHGDAAFAGQGVVAETLNLANLPGYRVGGTIHIIVNNQIGFTTAPEYSRSSEYCTDVAKMIGAPIFHVNGDDPEACVWVARLAVDFRQRFKKDVVIDMLCYRRRGHNEGDDPSMTNPYMYDVVDTKRGARKSYTEALIGRGDISMKEAEDALRDYQGQLERVFNEVRELEKHGVQPSESVESDQMIPAGLATAVDKSLLARIGDAFLALPNGFTAHPRVQPVLEKRREMAYEGKIDWAFGELLALGSLVAEGKLVRLSGQDSRRGTFSQRHSVLIDRHTGEEFTPLQLLATNSDGSPTGGKFLVYDSPLSEYAAVGFEYGYTVGNPDAVVLWEAQFGDFVNGAQSIIDEFISSGEAKWGQLSNVVLLLPHGHEGQGPDHTSARIERFLQLWAEGSMTIAMPSTPSNYFHLLRRHALDGIQRPLIVFTPKSMLRHKAAVSEIKDFTEIKFRSVLEEPTYEDGIGDRNKVSRILLTSGKLYYELAARKAKDNRNDLAIVRLEQLAPLPRRRLRETLDRYENVKEFFWVQEEPANQGAWPRFGLELPELLPDKLAGIKRISRRAMSAPSSGSSKVHAVEQQEILDEAFG.

The tract at residues 1-41 (MANISSPFGQNEWLVEAMYRKFRDDPSSVDPSWHEFLVDYS) is 2-oxoglutarate dehydrogenase E1, N-terminal part. A compositionally biased stretch (basic and acidic residues) spans 24-37 (DDPSSVDPSWHEFL). Positions 24–56 (DDPSSVDPSWHEFLVDYSPEPTSQPAAEPTRVT) are disordered. The tract at residues 42-88 (PEPTSQPAAEPTRVTSPLVAERAAAAAPQAPPKPADTAAAGNGVVAA) is linker. The interval 89-337 (LAAKTAVPPP…LRTIHELLLS (249 aa)) is succinyltransferase E2. Residue histidine 316 is the Proton acceptor; for succinyltransferase activity of the active site. A 2-oxoglutarate dehydrogenase E1, C-terminal part region spans residues 338-1231 (DGFWDEVFRE…QQEILDEAFG (894 aa)). Residue arginine 542 coordinates thiamine diphosphate. 2-oxoglutarate contacts are provided by histidine 581 and serine 606. Positions 606, 608, 649, 650, 651, and 682 each coordinate thiamine diphosphate. Aspartate 649 contacts Mg(2+). Mg(2+) contacts are provided by asparagine 682 and isoleucine 684. A coiled-coil region spans residues 787-817 (DISMKEAEDALRDYQGQLERVFNEVRELEKH). 2-oxoglutarate is bound at residue histidine 1024. Acetyl-CoA is bound by residues threonine 1042, arginine 1058, lysine 1093, serine 1096, glutamine 1146, arginine 1153, and arginine 1154.

Belongs to the 2-oxoacid dehydrogenase family. Kgd subfamily. Homodimer. The 2-oxoglutarate dehydrogenase (ODH) complex contains multiple copies of three enzymatic components: 2-oxoglutarate dehydrogenase (E1), dihydrolipoamide succinyltransferase (E2) and lipoamide dehydrogenase (E3). Mg(2+) is required as a cofactor. It depends on thiamine diphosphate as a cofactor.

It catalyses the reaction glyoxylate + 2-oxoglutarate + H(+) = 2-hydroxy-3-oxoadipate + CO2. It carries out the reaction 2-oxoglutarate + H(+) = succinate semialdehyde + CO2. The enzyme catalyses N(6)-[(R)-lipoyl]-L-lysyl-[protein] + 2-oxoglutarate + H(+) = N(6)-[(R)-S(8)-succinyldihydrolipoyl]-L-lysyl-[protein] + CO2. The catalysed reaction is N(6)-[(R)-dihydrolipoyl]-L-lysyl-[protein] + succinyl-CoA = N(6)-[(R)-S(8)-succinyldihydrolipoyl]-L-lysyl-[protein] + CoA. It functions in the pathway carbohydrate metabolism; tricarboxylic acid cycle; succinate from 2-oxoglutarate (transferase route): step 1/2. Its pathway is carbohydrate metabolism; tricarboxylic acid cycle; succinyl-CoA from 2-oxoglutarate (dehydrogenase route): step 1/1. Its activity is regulated as follows. Alpha-ketoglutarate dehydrogenase and decarboxylase activities are inhibited by unphosphorylated GarA, and allosterically activated by acetyl-CoA, the main substrate of the TCA cycle. Shows three enzymatic activities that share a first common step, the attack of thiamine-PP on 2-oxoglutarate (alpha-ketoglutarate, KG), leading to the formation of an enamine-thiamine-PP intermediate upon decarboxylation. Thus, displays KGD activity, catalyzing the decarboxylation from five-carbon 2-oxoglutarate to four-carbon succinate semialdehyde (SSA). Also catalyzes C-C bond formation between the activated aldehyde formed after decarboxylation of alpha-ketoglutarate and the carbonyl of glyoxylate (GLX), to yield 2-hydroxy-3-oxoadipate (HOA), which spontaneously decarboxylates to form 5-hydroxylevulinate (HLA). And is also a component of the 2-oxoglutarate dehydrogenase (ODH) complex, that catalyzes the overall conversion of 2-oxoglutarate to succinyl-CoA and CO(2). The KG decarboxylase and KG dehydrogenase reactions provide two alternative, tightly regulated, pathways connecting the oxidative and reductive branches of the TCA cycle. This Mycobacterium bovis (strain ATCC BAA-935 / AF2122/97) protein is Multifunctional 2-oxoglutarate metabolism enzyme (kgd).